The chain runs to 619 residues: 1-deoxy-D-xylulose-5-phosphate synthase (619 aa).

Thiamine diphosphate is bound by residues His63 and 104-106 (GHS). Asp136 is a binding site for Mg(2+). Residues 137 to 138 (GS), Asn165, Tyr272, and Glu353 each bind thiamine diphosphate. Residue Asn165 coordinates Mg(2+).

This sequence belongs to the transketolase family. DXPS subfamily. In terms of assembly, homodimer. Requires Mg(2+) as cofactor. Thiamine diphosphate is required as a cofactor.

It catalyses the reaction D-glyceraldehyde 3-phosphate + pyruvate + H(+) = 1-deoxy-D-xylulose 5-phosphate + CO2. It functions in the pathway metabolic intermediate biosynthesis; 1-deoxy-D-xylulose 5-phosphate biosynthesis; 1-deoxy-D-xylulose 5-phosphate from D-glyceraldehyde 3-phosphate and pyruvate: step 1/1. Its function is as follows. Catalyzes the acyloin condensation reaction between C atoms 2 and 3 of pyruvate and glyceraldehyde 3-phosphate to yield 1-deoxy-D-xylulose-5-phosphate (DXP). This is 1-deoxy-D-xylulose-5-phosphate synthase from Wolinella succinogenes (strain ATCC 29543 / DSM 1740 / CCUG 13145 / JCM 31913 / LMG 7466 / NCTC 11488 / FDC 602W) (Vibrio succinogenes).